Here is a 359-residue protein sequence, read N- to C-terminus: 3-dehydroquinate synthase (359 aa).

NAD(+) is bound by residues 70-75 (DAEGGK), 104-108 (GAATD), 128-129 (TT), Lys-141, and Lys-150. Glu-183, His-246, and His-262 together coordinate Zn(2+).

This sequence belongs to the sugar phosphate cyclases superfamily. Dehydroquinate synthase family. The cofactor is Co(2+). It depends on Zn(2+) as a cofactor. NAD(+) serves as cofactor.

The protein localises to the cytoplasm. The catalysed reaction is 7-phospho-2-dehydro-3-deoxy-D-arabino-heptonate = 3-dehydroquinate + phosphate. Its pathway is metabolic intermediate biosynthesis; chorismate biosynthesis; chorismate from D-erythrose 4-phosphate and phosphoenolpyruvate: step 2/7. Functionally, catalyzes the conversion of 3-deoxy-D-arabino-heptulosonate 7-phosphate (DAHP) to dehydroquinate (DHQ). The chain is 3-dehydroquinate synthase from Mycolicibacterium vanbaalenii (strain DSM 7251 / JCM 13017 / BCRC 16820 / KCTC 9966 / NRRL B-24157 / PYR-1) (Mycobacterium vanbaalenii).